Here is a 63-residue protein sequence, read N- to C-terminus: Cytochrome c oxidase subunit 7C, mitochondrial (63 aa).

The N-terminal 16 residues, 1-16 (MLGQSIRRFTTSVVRR), are a transit peptide targeting the mitochondrion. Over 17 to 33 (SHYEEGPGKNLPFSVEN) the chain is Mitochondrial matrix. Position 25 is an N6-acetyllysine; alternate (lysine 25). Lysine 25 carries the post-translational modification N6-succinyllysine; alternate. The helical transmembrane segment at 34–60 (KWSLLAKMCLYFGSAFATPFLVVRHQL) threads the bilayer. The Mitochondrial intermembrane portion of the chain corresponds to 61–63 (LKT).

This sequence belongs to the cytochrome c oxidase VIIc family. As to quaternary structure, component of the cytochrome c oxidase (complex IV, CIV), a multisubunit enzyme composed of 14 subunits. The complex is composed of a catalytic core of 3 subunits MT-CO1, MT-CO2 and MT-CO3, encoded in the mitochondrial DNA, and 11 supernumerary subunits COX4I1 (or COX4I2), COX5A, COX5B, COX6A1 (or COX6A2), COX6B1 (or COX6B2), COX6C, COX7A2 (or COX7A1), COX7B, COX7C, COX8A and NDUFA4, which are encoded in the nuclear genome. The complex exists as a monomer or a dimer and forms supercomplexes (SCs) in the inner mitochondrial membrane with NADH-ubiquinone oxidoreductase (complex I, CI) and ubiquinol-cytochrome c oxidoreductase (cytochrome b-c1 complex, complex III, CIII), resulting in different assemblies (supercomplex SCI(1)III(2)IV(1) and megacomplex MCI(2)III(2)IV(2)). Interacts with RAB5IF.

It localises to the mitochondrion inner membrane. Its pathway is energy metabolism; oxidative phosphorylation. Functionally, component of the cytochrome c oxidase, the last enzyme in the mitochondrial electron transport chain which drives oxidative phosphorylation. The respiratory chain contains 3 multisubunit complexes succinate dehydrogenase (complex II, CII), ubiquinol-cytochrome c oxidoreductase (cytochrome b-c1 complex, complex III, CIII) and cytochrome c oxidase (complex IV, CIV), that cooperate to transfer electrons derived from NADH and succinate to molecular oxygen, creating an electrochemical gradient over the inner membrane that drives transmembrane transport and the ATP synthase. Cytochrome c oxidase is the component of the respiratory chain that catalyzes the reduction of oxygen to water. Electrons originating from reduced cytochrome c in the intermembrane space (IMS) are transferred via the dinuclear copper A center (CU(A)) of subunit 2 and heme A of subunit 1 to the active site in subunit 1, a binuclear center (BNC) formed by heme A3 and copper B (CU(B)). The BNC reduces molecular oxygen to 2 water molecules using 4 electrons from cytochrome c in the IMS and 4 protons from the mitochondrial matrix. This Homo sapiens (Human) protein is Cytochrome c oxidase subunit 7C, mitochondrial (COX7C).